The primary structure comprises 301 residues: Probable 2-dehydro-3-deoxy-D-pentonate aldolase YjhH (301 aa).

Residues T46 and Y109 each act as charge relay system in the active site. The active-site Proton donor is Y135. K164 (schiff-base intermediate with substrate) is an active-site residue.

This sequence belongs to the DapA family.

The protein resides in the cytoplasm. It catalyses the reaction 2-dehydro-3-deoxy-D-arabinonate = glycolaldehyde + pyruvate. Functions as a 2-dehydro-3-deoxy-D-pentonate aldolase. The protein is Probable 2-dehydro-3-deoxy-D-pentonate aldolase YjhH (yjhH) of Escherichia coli (strain K12).